Consider the following 42-residue polypeptide: Photosystem II reaction center protein J (42 aa).

A helical transmembrane segment spans residues 10–30; it reads IPLWLVGTVAGILVLGLVGLF.

This sequence belongs to the PsbJ family. In terms of assembly, PSII is composed of 1 copy each of membrane proteins PsbA, PsbB, PsbC, PsbD, PsbE, PsbF, PsbH, PsbI, PsbJ, PsbK, PsbL, PsbM, PsbT, PsbX, PsbY, PsbZ, Psb30/Ycf12, at least 3 peripheral proteins of the oxygen-evolving complex and a large number of cofactors. It forms dimeric complexes.

It localises to the plastid. The protein resides in the chloroplast thylakoid membrane. In terms of biological role, one of the components of the core complex of photosystem II (PSII). PSII is a light-driven water:plastoquinone oxidoreductase that uses light energy to abstract electrons from H(2)O, generating O(2) and a proton gradient subsequently used for ATP formation. It consists of a core antenna complex that captures photons, and an electron transfer chain that converts photonic excitation into a charge separation. This chain is Photosystem II reaction center protein J, found in Staurastrum punctulatum (Green alga).